The chain runs to 727 residues: MQQKTKLFLQALKYSIPHLGKCMQKQHLNHYNFADHCYNRIKLKKYHLTKCLQNKPKISELARNIPSRSFSCKDLQPVKQENEKPLPENMDAFEKVRTKLETQPQEEYEIINVEVKHGGFVYYQEGCCLVRSKDEEADNDNYEVLFNLEELKLDQPFIDCIRVAPDEKYVAAKIRTEDSEASTCVIIKLSDQPVMEASFPNVSSFEWVKDEEDEDVLFYTFQRNLRCHDVYRATFGDNKRNERFYTEKDPSYFVFLYLTKDSRFLTINIMNKTTSEVWLIDGLSPWDPPVLIQKRIHGVLYYVEHRDDELYILTNVGEPTEFKLMRTAADTPAIMNWDLFFTMKRNTKVIDLDMFKDHCVLFLKHSNLLYVNVIGLADDSVRSLKLPPWACGFIMDTNSDPKNCPFQLCSPIRPPKYYTYKFAEGKLFEETGHEDPITKTSRVLRLEAKSKDGKLVPMTVFHKTDSEDLQKKPLLVHVYGAYGMDLKMNFRPERRVLVDDGWILAYCHVRGGGELGLQWHADGRLTKKLNGLADLEACIKTLHGQGFSQPSLTTLTAFSAGGVLAGALCNSNPELVRAVTLEAPFLDVLNTMMDTTLPLTLEELEEWGNPSSDEKHKNYIKRYCPYQNIKPQHYPSIHITAYENDERVPLKGIVSYTEKLKEAIAEHAKDTGEGYQTPNIILDIQPGGNHVIEDSHKKITAQIKFLYEELGLDSTSVFEDLKKYLKF.

An N-acetylmethionine modification is found at Met1. Residues Ser559, Asp645, and His690 each act as charge relay system in the active site.

The protein belongs to the peptidase S9A family. In terms of assembly, homodimer. Interacts with the AP-1 complex. In terms of tissue distribution, expressed in pyramidal neurons of the temporal cortex and neocortex (at protein level). Widely expressed. Expressed at higher level in brain, skeletal muscle, heart and kidney. Expressed at the endplates in the neuromuscular junction.

The protein resides in the cytoplasm. It localises to the cytosol. The protein localises to the golgi apparatus. Its subcellular location is the trans-Golgi network. It is found in the cytoskeleton. The protein resides in the nucleus. With respect to regulation, inhibited by PMSF and Prefabloc, as well as leupeptin at high concentrations. Partially inhibited by TPCK, a chymotrypsin inhibitor and E64, a cysteine protease inhibitor. Not affected by 4-amidinophenyl-methanesulfonyl fluoride (APMSF), pepstatin or EDTA. Inhibited by 1-isobutyl-3-oxo-3,5,6,7-tetrahydro-2H-cyclopenta[c]pyridine-4-carbonitrile. In terms of biological role, serine peptidase whose precise substrate specificity remains unclear. Does not cleave peptides after a arginine or lysine residue. Regulates trans-Golgi network morphology and sorting by regulating the membrane binding of the AP-1 complex. May play a role in the regulation of synaptic vesicle exocytosis. The chain is Prolyl endopeptidase-like (PREPL) from Homo sapiens (Human).